Reading from the N-terminus, the 533-residue chain is Drimenyl diphosphate synthase (533 aa).

Positions 132, 133, 163, and 165 each coordinate (2E,6E)-farnesyl diphosphate. Glu-169 is a Mg(2+) binding site. 5 PFTB repeats span residues 274–316 (VTPM…RRAA), 324–366 (VAEA…AHDP), 372–415 (VDEA…AAHG), 425–466 (AERA…ARGP), and 474–517 (LDRA…FVLL). Residue Asp-303 is the Proton donor of the active site. Arg-501 provides a ligand contact to (2E,6E)-farnesyl diphosphate.

The protein belongs to the terpene cyclase/mutase family. Mg(2+) serves as cofactor. Requires Ni(2+) as cofactor. The cofactor is Co(2+).

It catalyses the reaction (2E,6E)-farnesyl diphosphate = (5S,9S,10S)-drim-7-en-11-yl diphosphate. In terms of biological role, catalyzes the cyclization of farnesyl diphosphate (FPP) to drimenyl diphosphate. Cannot use geranylgeranyl diphosphate (GGPP) as substrate. The polypeptide is Drimenyl diphosphate synthase (Streptomyces showdoensis).